Consider the following 359-residue polypeptide: UDP-N-acetylglucosamine--N-acetylmuramyl-(pentapeptide) pyrophosphoryl-undecaprenol N-acetylglucosamine transferase (359 aa).

UDP-N-acetyl-alpha-D-glucosamine contacts are provided by residues 15 to 17 (TGG), N127, R166, S191, I245, 264 to 269 (ALTVSE), and Q290.

It belongs to the glycosyltransferase 28 family. MurG subfamily.

The protein localises to the cell inner membrane. The catalysed reaction is di-trans,octa-cis-undecaprenyl diphospho-N-acetyl-alpha-D-muramoyl-L-alanyl-D-glutamyl-meso-2,6-diaminopimeloyl-D-alanyl-D-alanine + UDP-N-acetyl-alpha-D-glucosamine = di-trans,octa-cis-undecaprenyl diphospho-[N-acetyl-alpha-D-glucosaminyl-(1-&gt;4)]-N-acetyl-alpha-D-muramoyl-L-alanyl-D-glutamyl-meso-2,6-diaminopimeloyl-D-alanyl-D-alanine + UDP + H(+). It functions in the pathway cell wall biogenesis; peptidoglycan biosynthesis. Functionally, cell wall formation. Catalyzes the transfer of a GlcNAc subunit on undecaprenyl-pyrophosphoryl-MurNAc-pentapeptide (lipid intermediate I) to form undecaprenyl-pyrophosphoryl-MurNAc-(pentapeptide)GlcNAc (lipid intermediate II). The polypeptide is UDP-N-acetylglucosamine--N-acetylmuramyl-(pentapeptide) pyrophosphoryl-undecaprenol N-acetylglucosamine transferase (Pseudomonas putida (strain W619)).